A 712-amino-acid polypeptide reads, in one-letter code: Cyclolysin secretion/processing ATP-binding protein CyaB (712 aa).

A Peptidase C39 domain is found at 7 to 128; that stretch reads QCASVPDSGL…ALWAGELLLC (122 aa). Positions 157-439 constitute an ABC transmembrane type-1 domain; the sequence is IGEVLLISLV…LAQLWNDFQQ (283 aa). 6 helical membrane-spanning segments follow: residues 160-180, 194-214, 272-292, 298-318, 367-387, and 390-410; these read VLLISLVLQFISLLTPLFFQV, LNVIAVGFLAAILFEALLTGI, AVTVLLDVVFSVVFIAVMFFY, LVVLAALPCYFLLSLVLTPVL, VAAGLSVANVAMLANTGVTLI, and LVALGVLWVGATEVVAQRMTV. The ABC transporter domain occupies 471–706; the sequence is IELDRVSFRY…GGLYARLQAL (236 aa). 505–512 contacts ATP; that stretch reads GRSGSGKS.

It belongs to the ABC transporter superfamily. Cyclolysin exporter (TC 3.A.1.109.2) family.

The protein localises to the cell membrane. Involved in the export of calmodulin-sensitive adenylate cyclase-hemolysin (cyclolysin). This chain is Cyclolysin secretion/processing ATP-binding protein CyaB (cyaB), found in Bordetella pertussis (strain ATCC 9797 / DSM 5571 / CCUG 30873 / LMG 14455 / NCTC 10739 / 18323).